We begin with the raw amino-acid sequence, 159 residues long: MPSFDVVSELDKHELTNAVDNAIKELDRRFDLKGKCSFEAKDKSVTLTAEADFMLEQMLDILRSNLVKRKVDSQCMEIKDAYPSGKVVKQDVNFREGIDKDLAKKIVGLIKERKLKVQAAIQGEQVRVTGKKRDDLQEAIALLRGESLGMPLQFTNFRD.

Belongs to the YajQ family.

Its function is as follows. Nucleotide-binding protein. This is Nucleotide-binding protein PLES_47741 from Pseudomonas aeruginosa (strain LESB58).